The chain runs to 460 residues: tRNA modification GTPase MnmE (460 aa).

(6S)-5-formyl-5,6,7,8-tetrahydrofolate-binding residues include arginine 24, glutamate 81, and lysine 121. Positions 218 to 384 (GLVVAIAGPP…MVEALAGFAA (167 aa)) constitute a TrmE-type G domain. GTP-binding positions include 228–233 (NVGKST), 247–253 (SPHAGTT), and 272–275 (DTAG). 2 residues coordinate Mg(2+): serine 232 and threonine 253. Lysine 460 lines the (6S)-5-formyl-5,6,7,8-tetrahydrofolate pocket.

This sequence belongs to the TRAFAC class TrmE-Era-EngA-EngB-Septin-like GTPase superfamily. TrmE GTPase family. As to quaternary structure, homodimer. Heterotetramer of two MnmE and two MnmG subunits. It depends on K(+) as a cofactor.

The protein localises to the cytoplasm. In terms of biological role, exhibits a very high intrinsic GTPase hydrolysis rate. Involved in the addition of a carboxymethylaminomethyl (cmnm) group at the wobble position (U34) of certain tRNAs, forming tRNA-cmnm(5)s(2)U34. This is tRNA modification GTPase MnmE from Rhodopseudomonas palustris (strain HaA2).